Consider the following 271-residue polypeptide: Tetraspanin-11 (271 aa).

Residues 1–7 (MFRVSNF) are Cytoplasmic-facing. The chain crosses the membrane as a helical span at residues 8–28 (MVGLANTLVMLVGASAIGYSI). Over 29–44 (YMFVHQGVTDCESAIR) the chain is Extracellular. A helical transmembrane segment spans residues 45-65 (IPLLTTGLILFLVSLLGVIGS). The Cytoplasmic portion of the chain corresponds to 66–76 (CFKENLAMVSY). Residues 77 to 97 (LIILFGGIVALMIFSIFLFFV) traverse the membrane as a helical segment. Topologically, residues 98 to 236 (TNKGAGRVVS…LANIREKWRN (139 aa)) are extracellular. N-linked (GlcNAc...) asparagine glycans are attached at residues N185 and N195. The helical transmembrane segment at 237-257 (LLVFNICLLILLITVYSCGCC) threads the bilayer. Over 258–271 (ARRNNRTARKSDSV) the chain is Cytoplasmic.

It belongs to the tetraspanin (TM4SF) family.

It is found in the membrane. May be involved in the regulation of cell differentiation. The sequence is that of Tetraspanin-11 (TET11) from Arabidopsis thaliana (Mouse-ear cress).